The following is a 329-amino-acid chain: Phosphate import ATP-binding protein PstB (329 aa).

One can recognise an ABC transporter domain in the interval 83-325 (FEIRNFNFWY…PKQKATNSYI (243 aa)). An ATP-binding site is contributed by 116–123 (GKSGCGKS).

It belongs to the ABC transporter superfamily. Phosphate importer (TC 3.A.1.7) family. As to quaternary structure, the complex is composed of two ATP-binding proteins (PstB), two transmembrane proteins (PstC and PstA) and a solute-binding protein (PstS).

Its subcellular location is the cell membrane. It catalyses the reaction phosphate(out) + ATP + H2O = ADP + 2 phosphate(in) + H(+). In terms of biological role, part of the ABC transporter complex PstSACB involved in phosphate import. Responsible for energy coupling to the transport system. This chain is Phosphate import ATP-binding protein PstB, found in Mycoplasma genitalium (strain ATCC 33530 / DSM 19775 / NCTC 10195 / G37) (Mycoplasmoides genitalium).